Consider the following 625-residue polypeptide: Histone-lysine N-methyltransferase set9 (625 aa).

Residues 120–234 (SPFEVTTTNR…IGEEITVSYG (115 aa)) enclose the SET domain. Disordered stretches follow at residues 260–348 (PHVD…ETSI), 368–405 (GSAVEVSQASATDCDSSPSLEADESHHSSTSTTPTSIG), 432–451 (ITGQPHNDRHPPGTDNDMLS), 457–476 (TDNPQKPKRSRGSRWKHGVV), and 582–625 (VSFG…RMTM). Polar residues-rich tracts occupy residues 269 to 286 (SKASTPALNDEAISNDSL) and 372 to 386 (EVSQASATDCDSSPS). Residues 462–473 (KPKRSRGSRWKH) are compositionally biased toward basic residues. Over residues 593-610 (SEPRTETEDSEACDDRRN) the composition is skewed to basic and acidic residues. Basic residues predominate over residues 611–625 (TRASRTRTRSLRMTM).

The protein belongs to the class V-like SAM-binding methyltransferase superfamily. Histone-lysine methyltransferase family. Suvar4-20 subfamily.

Its subcellular location is the nucleus. It localises to the chromosome. It catalyses the reaction L-lysyl(20)-[histone H4] + 3 S-adenosyl-L-methionine = N(6),N(6),N(6)-trimethyl-L-lysyl(20)-[histone H4] + 3 S-adenosyl-L-homocysteine + 3 H(+). Its function is as follows. Histone methyltransferase that trimethylates 'Lys-20' of histone H4 to form H4K20me3. The sequence is that of Histone-lysine N-methyltransferase set9 (set9) from Aspergillus oryzae (strain ATCC 42149 / RIB 40) (Yellow koji mold).